The sequence spans 240 residues: Serine protease SplB (240 aa).

A signal peptide spans 1-36 (MNKNVVIKSLATLTILTSVTGIGTTLVEEVQQTAKA). Catalysis depends on charge relay system residues H75, D113, and S193.

The protein belongs to the peptidase S1B family.

It is found in the secreted. In terms of biological role, serine protease that cleaves specifically after the sequence Trp-Glu-Leu-Gln. In Staphylococcus aureus (strain Mu3 / ATCC 700698), this protein is Serine protease SplB (splB).